A 301-amino-acid polypeptide reads, in one-letter code: Glycine--tRNA ligase alpha subunit (301 aa).

The protein belongs to the class-II aminoacyl-tRNA synthetase family. As to quaternary structure, tetramer of two alpha and two beta subunits.

It localises to the cytoplasm. It catalyses the reaction tRNA(Gly) + glycine + ATP = glycyl-tRNA(Gly) + AMP + diphosphate. The polypeptide is Glycine--tRNA ligase alpha subunit (Shewanella denitrificans (strain OS217 / ATCC BAA-1090 / DSM 15013)).